Reading from the N-terminus, the 93-residue chain is Histone H2B (93 aa).

A compositionally biased stretch (low complexity) spans 1–12 (MPEPAKSAPAPK). Residues 1–31 (MPEPAKSAPAPKKGSKKAVTKTQKKGDKKRX) are disordered. 2 positions are modified to N6-acetyllysine: K6 and K13. Basic residues predominate over residues 13-28 (KGSKKAVTKTQKKGDK). At S15 the chain carries Phosphoserine. N6-acetyllysine is present on residues K16 and K21.

It belongs to the histone H2B family. The nucleosome is a histone octamer containing two molecules each of H2A, H2B, H3 and H4 assembled in one H3-H4 heterotetramer and two H2A-H2B heterodimers. The octamer wraps approximately 147 bp of DNA. Monoubiquitination at the C-terminal Lys gives a specific tag for epigenetic transcriptional activation and is also prerequisite for histone H3 'Lys-4' and 'Lys-79' methylation. In terms of processing, phosphorylated on Ser-15 during apoptosis; which facilitates apoptotic chromatin condensation.

The protein localises to the nucleus. It localises to the chromosome. Functionally, core component of nucleosome. Nucleosomes wrap and compact DNA into chromatin, limiting DNA accessibility to the cellular machineries which require DNA as a template. Histones thereby play a central role in transcription regulation, DNA repair, DNA replication and chromosomal stability. DNA accessibility is regulated via a complex set of post-translational modifications of histones, also called histone code, and nucleosome remodeling. The polypeptide is Histone H2B (Crocodylus niloticus (Nile crocodile)).